The sequence spans 739 residues: Phosphoribosylformylglycinamidine synthase subunit PurL (739 aa).

The active site involves H54. Residues Y57 and K96 each contribute to the ATP site. E98 contacts Mg(2+). Residues 99-102 (SHNH) and R121 contribute to the substrate site. The active-site Proton acceptor is H100. D122 provides a ligand contact to Mg(2+). Q245 lines the substrate pocket. D273 is a Mg(2+) binding site. 317–319 (ESQ) is a binding site for substrate. Positions 500 and 537 each coordinate ATP. N538 is a Mg(2+) binding site. S540 contacts substrate.

It belongs to the FGAMS family. As to quaternary structure, monomer. Part of the FGAM synthase complex composed of 1 PurL, 1 PurQ and 2 PurS subunits.

The protein localises to the cytoplasm. The catalysed reaction is N(2)-formyl-N(1)-(5-phospho-beta-D-ribosyl)glycinamide + L-glutamine + ATP + H2O = 2-formamido-N(1)-(5-O-phospho-beta-D-ribosyl)acetamidine + L-glutamate + ADP + phosphate + H(+). It functions in the pathway purine metabolism; IMP biosynthesis via de novo pathway; 5-amino-1-(5-phospho-D-ribosyl)imidazole from N(2)-formyl-N(1)-(5-phospho-D-ribosyl)glycinamide: step 1/2. Functionally, part of the phosphoribosylformylglycinamidine synthase complex involved in the purines biosynthetic pathway. Catalyzes the ATP-dependent conversion of formylglycinamide ribonucleotide (FGAR) and glutamine to yield formylglycinamidine ribonucleotide (FGAM) and glutamate. The FGAM synthase complex is composed of three subunits. PurQ produces an ammonia molecule by converting glutamine to glutamate. PurL transfers the ammonia molecule to FGAR to form FGAM in an ATP-dependent manner. PurS interacts with PurQ and PurL and is thought to assist in the transfer of the ammonia molecule from PurQ to PurL. This is Phosphoribosylformylglycinamidine synthase subunit PurL from Bacillus cereus (strain B4264).